Here is a 155-residue protein sequence, read N- to C-terminus: Cytochrome c-type biogenesis protein CcmE (155 aa).

The Cytoplasmic segment spans residues 1–7 (MTRKQKR). The chain crosses the membrane as a helical; Signal-anchor for type II membrane protein span at residues 8–28 (LVVIAGGMSFILAAVLLVMFA). Residues 29 to 155 (FSQSVAYFYM…GKGQEAKATP (127 aa)) are Periplasmic-facing. H124 and Y128 together coordinate heme.

It belongs to the CcmE/CycJ family.

Its subcellular location is the cell inner membrane. Its function is as follows. Heme chaperone required for the biogenesis of c-type cytochromes. Transiently binds heme delivered by CcmC and transfers the heme to apo-cytochromes in a process facilitated by CcmF and CcmH. The protein is Cytochrome c-type biogenesis protein CcmE of Rhizobium etli (strain ATCC 51251 / DSM 11541 / JCM 21823 / NBRC 15573 / CFN 42).